A 452-amino-acid chain; its full sequence is Glutathione gamma-glutamylcysteinyltransferase 2 (452 aa).

The region spanning 1–220 (MSMASLYRRS…GFMLISRPHR (220 aa)) is the Peptidase C83 domain. The stretch at 287 to 315 (EDVNQNLSSEEKSRLKLKQELLKQVQETK) forms a coiled coil.

Belongs to the phytochelatin synthase family. As to expression, expressed in shoots, roots, leaves, stems and flowers.

The enzyme catalyses [Glu(-Cys)](n)-Gly + glutathione + H(+) = [Glu(-Cys)](n+1)-Gly + glycine. With respect to regulation, requires cadmium for activity. Also activated in heterologous system by AsO(4)(3-) ions, but not by Cu(2+), Zn(2+), Mn(2+) or Ni(2+) ions. In terms of biological role, involved in the synthesis of phytochelatins (PC) and homophytochelatins (hPC), the heavy-metal-binding peptides of plants. The polypeptide is Glutathione gamma-glutamylcysteinyltransferase 2 (PCS2) (Arabidopsis thaliana (Mouse-ear cress)).